We begin with the raw amino-acid sequence, 707 residues long: MVKLAKAGKTHGEAKKMAPPPKEVEEDSEDEEMSEDEDDSSGEEEVVIPQKKGKKATTTPAKKVVVSQTKKAAVPTPAKKAAVTPGKKAVATPAKKNITPAKVIPTPGKKGAAQAKALVPTPGKKGAATPAKGAKNGKNAKKEDSDEDEDEEDEDDSDEDEDDEEEDEFEPPIVKGVKPAKAAPAAPASEDEEDDEDEDDEEDDDEEEEDDSEEEVMEITTAKGKKTPAKVVPMKAKSVAEEEDDEEEDEDDEDEDDEEEDDEDDDEEEEEEEPVKAAPGKRKKEMTKQKEAPEAKKQKVEGSEPTTPFNLFIGNLNPNKSVNELKFAISELFAKNDLAVVDVRTGTNRKFGYVDFESAEDLEKALELTGLKVFGNEIKLEKPKGRDSKKVRAARTLLAKNLSFNITEDELKEVFEDAMEIRLVSQDGKSKGIAYIEFKSEADAEKNLEEKQGAEIDGRSVSLYYTGEKGQRQERTGKTSTWSGESKTLVLSNLSYSATKETLEEVFEKATFIKVPQNPHGKPKGYAFIEFASFEDAKEALNSCNKMEIEGRTIRLELQGSNSRSQPSKTLFVKGLSEDTTEETLKESFEGSVRARIVTDRETGSSKGFGFVDFNSEEDAKAAKEAMEDGEIDGNKVTLDWAKPKGEGGFGGRGGGRGGFGGRGGGRGGRGGFGGRGRGGFGGRGGFRGGRGGGGDFKPQGKKTKFE.

The segment at 1–308 (MVKLAKAGKT…KVEGSEPTTP (308 aa)) is disordered. 3 positions are modified to N6-acetyllysine: Lys-9, Lys-15, and Lys-16. Over residues 24–46 (VEEDSEDEEMSEDEDDSSGEEEV) the composition is skewed to acidic residues. 4 positions are modified to phosphoserine: Ser-28, Ser-34, Ser-40, and Ser-41. Low complexity predominate over residues 56–92 (ATTTPAKKVVVSQTKKAAVPTPAKKAAVTPGKKAVAT). Repeat 1 spans residues 58–65 (TTPAKKVV). Residues 58-135 (TTPAKKVVVS…GAATPAKGAK (78 aa)) form an 8 X 8 AA tandem repeats of X-T-P-X-K-K-X-X region. Residue Ser-67 is modified to Phosphoserine. 4 positions are modified to phosphothreonine: Thr-69, Thr-76, Thr-84, and Thr-92. A run of 3 repeats spans residues 75 to 82 (PTPAKKAA), 83 to 90 (VTPGKKAV), and 91 to 98 (ATPAKKNI). Lys-96 bears the N6-acetyllysine mark. The residue at position 99 (Thr-99) is a Phosphothreonine. Residues 99–104 (TPAKVI) form a 5; truncated repeat. Lys-102 carries the N6-acetyllysine modification. The stretch at 105-112 (PTPGKKGA) is repeat 6. The residue at position 106 (Thr-106) is a Phosphothreonine. Lys-109 and Lys-116 each carry N6-acetyllysine. A run of 2 repeats spans residues 120-127 (PTPGKKGA) and 128-135 (ATPAKGAK). Position 121 is a phosphothreonine (Thr-121). The span at 121–137 (TPGKKGAATPAKGAKNG) shows a compositional bias: low complexity. The residue at position 124 (Lys-124) is an N6-acetyllysine. Residues Ser-145 and Ser-157 each carry the phosphoserine modification. Over residues 145–170 (SDEDEDEEDEDDSDEDEDDEEEDEFE) the composition is skewed to acidic residues. Over residues 179–188 (PAKAAPAAPA) the composition is skewed to low complexity. Phosphoserine is present on residues Ser-189 and Ser-212. Positions 189–217 (SEDEEDDEDEDDEEDDDEEEEDDSEEEVM) are enriched in acidic residues. Thr-220 bears the Phosphothreonine mark. A compositionally biased stretch (acidic residues) spans 241-273 (EEEDDEEEDEDDEDEDDEEEDDEDDDEEEEEEE). Over residues 286-302 (MTKQKEAPEAKKQKVEG) the composition is skewed to basic and acidic residues. Residue Lys-299 forms a Glycyl lysine isopeptide (Lys-Gly) (interchain with G-Cter in SUMO1); alternate linkage. A Glycyl lysine isopeptide (Lys-Gly) (interchain with G-Cter in SUMO2); alternate cross-link involves residue Lys-299. Ser-303 carries the phosphoserine modification. RRM domains lie at 309–385 (FNLF…KPKG) and 395–468 (RTLL…YTGE). Lys-320 is modified (N6-acetyllysine). A Glycyl lysine isopeptide (Lys-Gly) (interchain with G-Cter in SUMO1); alternate cross-link involves residue Lys-326. Lys-326 participates in a covalent cross-link: Glycyl lysine isopeptide (Lys-Gly) (interchain with G-Cter in SUMO2); alternate. Lys-350 carries the post-translational modification N6-acetyllysine. The residue at position 358 (Ser-358) is a Phosphoserine. Thr-369 is modified (phosphothreonine). Lys-372 is covalently cross-linked (Glycyl lysine isopeptide (Lys-Gly) (interchain with G-Cter in SUMO2)). Lys-379 participates in a covalent cross-link: Glycyl lysine isopeptide (Lys-Gly) (interchain with G-Cter in SUMO2); alternate. Lys-379 is modified (N6-acetyllysine; alternate). Lys-400 bears the N6-acetyllysine mark. Ser-403 carries the post-translational modification Phosphoserine. Thr-407 carries the post-translational modification Phosphothreonine. 2 positions are modified to N6-acetyllysine: Lys-429 and Lys-446. Ser-460 and Ser-462 each carry phosphoserine. 2 positions are modified to N6-acetyllysine: Lys-469 and Lys-478. RRM domains follow at residues 487 to 561 (KTLV…LQGS) and 569 to 644 (KTLF…WAKP). Lys-514 participates in a covalent cross-link: Glycyl lysine isopeptide (Lys-Gly) (interchain with G-Cter in SUMO2); alternate. At Lys-514 the chain carries N6-acetyllysine; alternate. An N6-acetyllysine mark is found at Lys-522 and Lys-569. Lys-574 participates in a covalent cross-link: Glycyl lysine isopeptide (Lys-Gly) (interchain with G-Cter in SUMO2); alternate. N6-acetyllysine; alternate is present on Lys-574. Ser-577 is modified (phosphoserine). Lys-586 is covalently cross-linked (Glycyl lysine isopeptide (Lys-Gly) (interchain with G-Cter in SUMO1); alternate). A Glycyl lysine isopeptide (Lys-Gly) (interchain with G-Cter in SUMO2); alternate cross-link involves residue Lys-586. 2 positions are modified to phosphoserine: Ser-588 and Ser-616. Lys-621 is covalently cross-linked (Glycyl lysine isopeptide (Lys-Gly) (interchain with G-Cter in SUMO2)). Positions 639-707 (LDWAKPKGEG…KPQGKKTKFE (69 aa)) are disordered. An N6-acetyllysine modification is found at Lys-643. The segment covering 647–696 (EGGFGGRGGGRGGFGGRGGGRGGRGGFGGRGRGGFGGRGGFRGGRGGGGD) has biased composition (gly residues). Asymmetric dimethylarginine is present on residues Arg-653, Arg-657, Arg-663, Arg-667, Arg-670, Arg-676, Arg-678, Arg-684, and Arg-688. An Asymmetric dimethylarginine; alternate modification is found at Arg-691. Arg-691 is modified (omega-N-methylarginine; alternate).

As to quaternary structure, identified in a IGF2BP1-dependent mRNP granule complex containing untranslated mRNAs. Component of the SWAP complex that consists of NPM1, NCL/nucleolin, PARP1 and SWAP70. Component of a complex which is at least composed of HTATSF1/Tat-SF1, the P-TEFb complex components CDK9 and CCNT1, RNA polymerase II, SUPT5H, and NCL/nucleolin. Interacts with AICDA. Interacts with APTX. Interacts with C1QBP. Interacts with ERBB4. Interacts (via C-terminus) with FMR1 isoform 6 (via N-terminus). Interacts with GZF1; this interaction is important for nucleolar localization of GZF1. Interacts with NSUN2. Interacts with NVL. Interacts (via N-terminus domain) with SETX. Interacts (via RRM1 and C-terminal RRM4/Arg/Gly-rich domains) with TERT; the interaction is important for nucleolar localization of TERT. Interacts with WDR46. Interacts with ZFP36. Interacts with LRRC34. Interacts with RRP1B. Interacts with HNRNPU; this interaction occurs during mitosis. Interacts with RIOK1; RIOK1 recruits NCL to PRMT5 for symmetrically methylation. Interacts with ZBTB7B. Interacts with MDK; this interaction promotes NCL clustering and lateral movements of this complex into lipid rafts leading to MDK internalization. Interacts with HDGF. Interacts with ALKBH2. Interacts with IGFBP5; this interaction is necessary for IGFBP5 localization to the nucleus. Interacts with DDX24 (when ubiquitinated); this interaction may be important during ribosome biogenesis. Post-translationally, some glutamate residues are glycylated by TTLL8. This modification occurs exclusively on glutamate residues and results in a glycine chain on the gamma-carboxyl group. Symmetrically methylated by PRMT5. In terms of tissue distribution, expressed in B-cells that have been induced to switch to various Ig isotypes.

It is found in the nucleus. Its subcellular location is the nucleolus. It localises to the cytoplasm. Its function is as follows. Nucleolin is the major nucleolar protein of growing eukaryotic cells. It is found associated with intranucleolar chromatin and pre-ribosomal particles. It induces chromatin decondensation by binding to histone H1. It is thought to play a role in pre-rRNA transcription and ribosome assembly. May play a role in the process of transcriptional elongation. Binds RNA oligonucleotides with 5'-UUAGGG-3' repeats more tightly than the telomeric single-stranded DNA 5'-TTAGGG-3' repeats. This is Nucleolin (Ncl) from Mus musculus (Mouse).